We begin with the raw amino-acid sequence, 356 residues long: Peptide chain release factor 1 (356 aa).

Gln233 is subject to N5-methylglutamine.

This sequence belongs to the prokaryotic/mitochondrial release factor family. Methylated by PrmC. Methylation increases the termination efficiency of RF1.

The protein resides in the cytoplasm. Its function is as follows. Peptide chain release factor 1 directs the termination of translation in response to the peptide chain termination codons UAG and UAA. This Symbiobacterium thermophilum (strain DSM 24528 / JCM 14929 / IAM 14863 / T) protein is Peptide chain release factor 1.